The chain runs to 238 residues: Sugar fermentation stimulation protein homolog (238 aa).

Belongs to the SfsA family.

The protein is Sugar fermentation stimulation protein homolog of Pseudomonas entomophila (strain L48).